The chain runs to 295 residues: Acetaldehyde dehydrogenase (295 aa).

Residue 11–14 coordinates NAD(+); that stretch reads SGNI. Residue Cys127 is the Acyl-thioester intermediate of the active site. NAD(+)-binding positions include 158–166 and Asn269; that span reads SAGPGTRSN.

The protein belongs to the acetaldehyde dehydrogenase family.

It carries out the reaction acetaldehyde + NAD(+) + CoA = acetyl-CoA + NADH + H(+). In Brevibacillus brevis (strain 47 / JCM 6285 / NBRC 100599), this protein is Acetaldehyde dehydrogenase.